The following is a 270-amino-acid chain: tRNA pseudouridine synthase A (270 aa).

Asp-60 (nucleophile) is an active-site residue. The interval 107 to 111 (FHARF) is RNA binding. Substrate is bound at residue Tyr-118. The segment at 168-172 (QCQSR) is interaction with tRNA.

Belongs to the tRNA pseudouridine synthase TruA family. In terms of assembly, homodimer.

It catalyses the reaction uridine(38/39/40) in tRNA = pseudouridine(38/39/40) in tRNA. Formation of pseudouridine at positions 38, 39 and 40 in the anticodon stem and loop of transfer RNAs. The protein is tRNA pseudouridine synthase A of Shigella boydii serotype 18 (strain CDC 3083-94 / BS512).